The following is a 326-amino-acid chain: Serine hydrolase-like protein (326 aa).

One can recognise an AB hydrolase-1 domain in the interval 44–155; sequence PVLCLHGWAD…FLPTEVTDMF (112 aa). The active site involves S118.

The protein belongs to the AB hydrolase superfamily.

Probable serine hydrolase. This chain is Serine hydrolase-like protein (serhl), found in Danio rerio (Zebrafish).